Reading from the N-terminus, the 450-residue chain is Solute carrier family 52, riboflavin transporter, member 2 (450 aa).

A run of 5 helical transmembrane segments spans residues 14 to 34 (LLVALFGMGSWIAVNGIWVEL), 47 to 67 (LPSYLSVLVALGNLGLLLVTL), 79 to 99 (IPIQVVQGLSIVGTGLLAPLW), 114 to 136 (FLTLAFVLALSCCASNVTFLPFL), and 147 to 167 (FFLGQGLSALLPCVLALAQGV). A glycan (N-linked (GlcNAc...) asparagine) is linked at asparagine 178. Residues 201 to 221 (FFWVLTALLGTSAAAFQGLLL) traverse the membrane as a helical segment. The interval 230-268 (ATMGTGLRVETPGTEEEEEEEEASPLQEPPGQVASIVSS) is disordered. Residues 242–252 (GTEEEEEEEEA) show a composition bias toward acidic residues. Transmembrane regions (helical) follow at residues 282 to 302 (ACLLGLLAITNALTNGVLPAV), 317 to 337 (LAVVLGSSANPLACFLAMAVL), 344 to 364 (LYGLCLLGMFFGTYLMTLAVL), 371 to 391 (VGTSAGVVLVVLSWVLCAGVF), and 409 to 429 (ALLAAGVAIQVGSLLGAIAMF).

The protein belongs to the riboflavin transporter family. In terms of tissue distribution, highly expressed in the placenta and small intestine, moderately in the kidney, colon, lung, prostate, uterus, and thymus, and weakly in all other tissues.

Its subcellular location is the cell membrane. It catalyses the reaction riboflavin(in) = riboflavin(out). With respect to regulation, riboflavin transport is Na(+)-independent but moderately pH-sensitive. Activity is strongly inhibited by riboflavin analogs, such as lumiflavin. Weakly inhibited by flavin adenine dinucleotide (FAD) and flavin mononucleotide (FMN). Plasma membrane transporter mediating the uptake by cells of the water soluble vitamin B2/riboflavin that plays a key role in biochemical oxidation-reduction reactions of the carbohydrate, lipid, and amino acid metabolism. May also act as a receptor for 4-hydroxybutyrate. This chain is Solute carrier family 52, riboflavin transporter, member 2 (Slc52a2), found in Rattus norvegicus (Rat).